Here is a 216-residue protein sequence, read N- to C-terminus: Gas vesicle protein H (216 aa).

The interval 1–141 is disordered; the sequence is MSPNLNGPGG…IHIETRETDD (141 aa). A compositionally biased stretch (acidic residues) spans 15-25; sequence DRPDEPDDSDR. Basic and acidic residues-rich tracts occupy residues 38-51, 73-84, and 107-141; these read PDDR…RPSD, DGHRQGHGRIDR, and KPSD…ETDD.

It belongs to the gas vesicle GvpH family. As to quaternary structure, gvpF to GvpM interact with each other in vitro, and may form multi-subunit complex(es). Interacts with GvpC. Might interact with GvpA.

It localises to the gas vesicle. Proteins GvpF to GvpM might be involved in nucleating gas vesicle formation. A minor component of the gas vesicle. Gas vesicles are hollow, gas filled proteinaceous nanostructures found in some microorganisms. They allow positioning of halobacteria at the optimal depth for growth in the poorly aerated, shallow brine pools of their habitat. Functionally, expression of a 9.5 kb mc-vac DNA fragment containing 2 divergently transcribed regions (gvpD-gvpE-gvpF-gvpG-gvpH-gvpI-gvpJ-gvpK-gvpL-gvpM and gvpA-gvpC-gvpN-gvpO) allows H.volcanii to produce gas vesicles. This Haloferax mediterranei (strain ATCC 33500 / DSM 1411 / JCM 8866 / NBRC 14739 / NCIMB 2177 / R-4) (Halobacterium mediterranei) protein is Gas vesicle protein H.